A 953-amino-acid chain; its full sequence is Nucleotide-binding oligomerization domain-containing protein 1 (953 aa).

One can recognise a CARD domain in the interval 15 to 107 (GCHSHIKLLK…VDLRLWLSEI (93 aa)). The 336-residue stretch at 196–531 (ETVFVFGDAG…AFFTAFFLVA (336 aa)) folds into the NACHT domain. 202–209 (GDAGVGKS) serves as a coordination point for ATP. S-palmitoyl cysteine attachment occurs at residues Cys558 and Cys567. LRR repeat units follow at residues 702-725 (FHRQ…ELQP), 727-750 (FSRL…VLCE), 755-778 (YKIV…YVAQ), 783-806 (CRGL…CVAL), 839-862 (HPSL…SLAQ), 867-890 (NTTL…CFAE), 895-918 (NQTL…QLAR), and 923-946 (NTAI…VFEN). The S-palmitoyl cysteine moiety is linked to residue Cys952.

This sequence belongs to the NOD1-NOD2 family. Homooligomer: homooligomerizes following ligand-binding, promoting RIPK2 recruitment. Interacts (via CARD domain) with RIPK2 (via CARD domain). Following RIPK2 recruitment, RIPK2 homooligomerizes via its CARD domain and forms long filaments named RIPosomes. Interacts (via CARD domain) with ubiquitin; inhibiting interaction with RIPK2. Interacts with ARHGEF2. Interacts with NLRP10 and recruits it to the cell membrane following invasive bacterial infection. Interacts with IFIH1; this interaction promotes transcription of antiviral genes and inhibition of viral replication. Interacts with Irgm1; promoting NOD1 degradation. Interacts with ATG16L1. In terms of processing, ubiquitinated. 'Lys-48'-linked polyubiquitination by RNF34 promotes proteasomal degradation and thereby negatively regulates NOD1 for instance in NF-kappa-B activation. Post-translationally, palmitoylated. Palmitoylation is required for proper recruitment to the bacterial entry site and hence for proper signaling upon cognate peptidoglycan detection. Degraded via selective autophagy following interaction with Irgm1. Irgm1 promotes NOD1-RIPK2 RIPosome recruitment to autophagosome membranes, promoting their SQSTM1/p62-dependent autophagic degradation. As to expression, although ubiquitously expressed, NOD1 levels are more abundant in immune cells, the gastrointestinal tract, and adipose tissue.

It localises to the cell membrane. It is found in the apical cell membrane. Its subcellular location is the basolateral cell membrane. The protein localises to the cytoplasm. Pattern recognition receptor (PRR) that detects bacterial peptidoglycan fragments and other danger signals and thus participates in both innate and adaptive immune responses. Specifically recognizes and binds gamma-D-glutamyl-meso-diaminopimelic acid (iE-DAP), a dipeptide present in peptidoglycan of Gram-negative bacteria. Preferentially binds iE-DAP in tetrapeptide-containing muropeptides (MurNAc-TetraDAP or TetraDAP). Ligand binding triggers oligomerization that facilitates the binding and subsequent activation of the proximal adapter receptor-interacting RIPK2. Following recruitment, RIPK2 undergoes 'Met-1'- (linear) and 'Lys-63'-linked polyubiquitination by E3 ubiquitin-protein ligases XIAP, BIRC2, BIRC3 and the LUBAC complex, becoming a scaffolding protein for downstream effectors, triggering activation of the NF-kappa-B and MAP kinases signaling. This in turn leads to the transcriptional activation of hundreds of genes involved in immune response. Also acts as a regulator of antiviral response elicited by dsRNA and the expression of RLR pathway members by targeting IFIH1 and TRAF3 to modulate the formation of IFIH1-MAVS and TRAF3-MAVS complexes leading to increased transcription of type I IFNs. Also acts as a regulator of autophagy via its interaction with ATG16L1, possibly by recruiting ATG16L1 at the site of bacterial entry. Besides recognizing pathogens, also involved in the endoplasmic reticulum stress response: acts by sensing and binding to the cytosolic metabolite sphingosine-1-phosphate generated in response to endoplasmic reticulum stress, initiating an inflammation process that leads to activation of the NF-kappa-B and MAP kinases signaling. In addition, plays a role in insulin trafficking in beta cells in a cell-autonomous manner. Mechanistically, upon recognizing cognate ligands, NOD1 and RIPK2 localize to insulin vesicles where they recruit RAB1A to direct insulin trafficking through the cytoplasm. The protein is Nucleotide-binding oligomerization domain-containing protein 1 of Mus musculus (Mouse).